Here is a 465-residue protein sequence, read N- to C-terminus: UDP-N-acetylmuramoylalanine--D-glutamate ligase (465 aa).

127-133 (GSNGKST) is a binding site for ATP.

This sequence belongs to the MurCDEF family.

It localises to the cytoplasm. It catalyses the reaction UDP-N-acetyl-alpha-D-muramoyl-L-alanine + D-glutamate + ATP = UDP-N-acetyl-alpha-D-muramoyl-L-alanyl-D-glutamate + ADP + phosphate + H(+). It participates in cell wall biogenesis; peptidoglycan biosynthesis. Functionally, cell wall formation. Catalyzes the addition of glutamate to the nucleotide precursor UDP-N-acetylmuramoyl-L-alanine (UMA). In Cereibacter sphaeroides (strain ATCC 17025 / ATH 2.4.3) (Rhodobacter sphaeroides), this protein is UDP-N-acetylmuramoylalanine--D-glutamate ligase.